A 243-amino-acid polypeptide reads, in one-letter code: R-spondin-2 (243 aa).

Positions 1 to 21 (MQFQLFSFVLIILNCVDYSHC) are cleaved as a signal peptide. 11 disulfide bridges follow: cysteine 40–cysteine 46, cysteine 43–cysteine 52, cysteine 55–cysteine 74, cysteine 78–cysteine 93, cysteine 96–cysteine 104, cysteine 101–cysteine 110, cysteine 113–cysteine 124, cysteine 128–cysteine 141, cysteine 145–cysteine 187, cysteine 156–cysteine 163, and cysteine 196–cysteine 203. An FU repeat occupies 90–134 (MNRCSRCRIENCDSCFSRDFCIKCKSGFYSHKGQCFEECPEGFAP). The region spanning 144 to 204 (GCEVGPWSEW…RCKMAMRHCP (61 aa)) is the TSP type-1 domain. Asparagine 160 carries N-linked (GlcNAc...) asparagine glycosylation. The tract at residues 202-243 (HCPGGTRTTKKKDKKNKKKKKKLLERAQEQHSVVLATDRSSQ) is disordered. Residues 209-224 (TTKKKDKKNKKKKKKL) show a composition bias toward basic residues.

Belongs to the R-spondin family. In terms of assembly, binds heparin.

The protein resides in the secreted. Functionally, activator of the canonical Wnt signaling pathway by acting as a ligand for lgr4-6 receptors. Upon binding to lgr4-6 (lgr4, lgr5 or lgr6), lgr4-6 associate with phosphorylated lrp6 and frizzled receptors that are activated by extracellular Wnt receptors, triggering the canonical Wnt signaling pathway to increase expression of target genes. Acts both in the canonical. Wnt/beta-catenin-dependent pathway and in non-canonical Wnt signaling pathway. Activates neural markers and promotes muscle formation. Overexpression blocks activin, nodal and BMP4 signaling, suggesting that it may negatively regulate the TGF-beta pathway. During embryonic development, plays a crucial role in limb specification, amplifying the Wnt signaling pathway independently of LGR4-6 receptors, possibly by acting as a direct antagonistic ligand to RNF43 and ZNRF3, hence governing the number of limbs an embryo should form. The protein is R-spondin-2 (rspo2) of Xenopus tropicalis (Western clawed frog).